The following is a 105-amino-acid chain: Large ribosomal subunit protein bL21 (105 aa).

This sequence belongs to the bacterial ribosomal protein bL21 family. As to quaternary structure, part of the 50S ribosomal subunit. Contacts protein L20.

This protein binds to 23S rRNA in the presence of protein L20. In Rickettsia canadensis (strain McKiel), this protein is Large ribosomal subunit protein bL21.